The chain runs to 593 residues: Corrinoid activation enzyme RamQ (593 aa).

One can recognise a 2Fe-2S ferredoxin-type domain in the interval 1–76; the sequence is MRVLFPLLEE…GMEIYASREQ (76 aa). [2Fe-2S] cluster contacts are provided by C35, C41, C44, and C60.

[2Fe-2S] cluster is required as a cofactor.

Its function is as follows. Involved in the degradation of the quaternary amines L-proline betaine and L-carnitine. Component of a corrinoid-dependent methyltransferase system that transfers a methyl group from L-proline betaine or L-carnitine to tetrahydrofolate (THF), forming methyl-THF, a key intermediate in the Wood-Ljungdahl acetogenesis pathway. RamQ is not required for the methyl transfer, but it stimulates reduction of reconstituted MtqC from the Co(II) state to the Co(I) state in vitro. It also stimulates the rate of THF methylation. The sequence is that of Corrinoid activation enzyme RamQ from Eubacterium limosum.